Reading from the N-terminus, the 291-residue chain is ATP synthase gamma chain (291 aa).

Belongs to the ATPase gamma chain family. As to quaternary structure, F-type ATPases have 2 components, CF(1) - the catalytic core - and CF(0) - the membrane proton channel. CF(1) has five subunits: alpha(3), beta(3), gamma(1), delta(1), epsilon(1). CF(0) has three main subunits: a, b and c.

The protein resides in the cell inner membrane. Functionally, produces ATP from ADP in the presence of a proton gradient across the membrane. The gamma chain is believed to be important in regulating ATPase activity and the flow of protons through the CF(0) complex. The chain is ATP synthase gamma chain from Neisseria meningitidis serogroup B (strain ATCC BAA-335 / MC58).